Reading from the N-terminus, the 440-residue chain is Phosphoglucosamine mutase (440 aa).

Ser97 (phosphoserine intermediate) is an active-site residue. The Mg(2+) site is built by Ser97, Asp237, Asp239, and Asp241. Ser97 carries the post-translational modification Phosphoserine.

Belongs to the phosphohexose mutase family. Mg(2+) serves as cofactor. In terms of processing, activated by phosphorylation.

The enzyme catalyses alpha-D-glucosamine 1-phosphate = D-glucosamine 6-phosphate. Its function is as follows. Catalyzes the conversion of glucosamine-6-phosphate to glucosamine-1-phosphate. This chain is Phosphoglucosamine mutase, found in Nautilia profundicola (strain ATCC BAA-1463 / DSM 18972 / AmH).